The following is a 1342-amino-acid chain: Restriction of telomere capping protein 1 (1342 aa).

The disordered stretch occupies residues 1 to 39; the sequence is MSLSPHVENASIPKGSTPIPKNRNVSSIGKGEFLGSSSS. WD repeat units follow at residues 207–248, 256–296, 305–342, 367–406, 439–486, and 489–527; these read NKFS…SIDN, EHTR…SKSS, TASD…YKFA, AHTG…NAAE, NTDY…IPKH, and LSET…TVLE. Disordered stretches follow at residues 559-593, 600-619, 630-651, 736-766, and 788-831; these read PELQ…IGGI, TGLT…GPTF, ASSF…ENRE, KNAT…DDDD, and LMNE…DRSR. Residues 630–644 show a composition bias toward low complexity; it reads ASSFNSSSASLTSLT. The segment covering 753–766 has biased composition (acidic residues); it reads DDGDDDDDDDDDDD. Low complexity predominate over residues 815–824; sequence SSISSISASR. Residues 844-884 form a WD 7 repeat; sequence KIQTLVDLISIATHNASVYLSIDDLTNFKIWILIRDSLLWD. 2 disordered regions span residues 942–963 and 1014–1047; these read AFRA…KLKE and DEHE…PILQ. 2 stretches are compositionally biased toward basic and acidic residues: residues 952 to 963 and 1016 to 1028; these read DAEKKPVSKLKE and HEHQ…HDSP. Phosphoserine is present on residues serine 1037, serine 1081, serine 1088, serine 1090, serine 1124, and serine 1134. WD repeat units lie at residues 1130–1170 and 1217–1256; these read SRPD…KQLY and LFGI…LITN. The RING-type; degenerate zinc-finger motif lies at 1294–1336; that stretch reads CVLCERPLKKLTMVILPCGHEGHFQCIQEWFLDENEQECPGGC.

This sequence belongs to the WD repeat RTC1 family.

Its subcellular location is the vacuole. In terms of biological role, may be involved in a process influencing telomere capping. The sequence is that of Restriction of telomere capping protein 1 (RTC1) from Saccharomyces cerevisiae (strain RM11-1a) (Baker's yeast).